The chain runs to 245 residues: Phosphoribosylaminoimidazole-succinocarboxamide synthase (245 aa).

The protein belongs to the SAICAR synthetase family.

The enzyme catalyses 5-amino-1-(5-phospho-D-ribosyl)imidazole-4-carboxylate + L-aspartate + ATP = (2S)-2-[5-amino-1-(5-phospho-beta-D-ribosyl)imidazole-4-carboxamido]succinate + ADP + phosphate + 2 H(+). The protein operates within purine metabolism; IMP biosynthesis via de novo pathway; 5-amino-1-(5-phospho-D-ribosyl)imidazole-4-carboxamide from 5-amino-1-(5-phospho-D-ribosyl)imidazole-4-carboxylate: step 1/2. The chain is Phosphoribosylaminoimidazole-succinocarboxamide synthase from Acaryochloris marina (strain MBIC 11017).